A 314-amino-acid polypeptide reads, in one-letter code: Ribosomal protein L11 methyltransferase (314 aa).

Thr-163, Gly-184, Asp-206, and Asn-248 together coordinate S-adenosyl-L-methionine.

The protein belongs to the methyltransferase superfamily. PrmA family.

Its subcellular location is the cytoplasm. It carries out the reaction L-lysyl-[protein] + 3 S-adenosyl-L-methionine = N(6),N(6),N(6)-trimethyl-L-lysyl-[protein] + 3 S-adenosyl-L-homocysteine + 3 H(+). Its function is as follows. Methylates ribosomal protein L11. The polypeptide is Ribosomal protein L11 methyltransferase (Lactobacillus delbrueckii subsp. bulgaricus (strain ATCC 11842 / DSM 20081 / BCRC 10696 / JCM 1002 / NBRC 13953 / NCIMB 11778 / NCTC 12712 / WDCM 00102 / Lb 14)).